The sequence spans 737 residues: Zinc finger protein 280C (737 aa).

Glycyl lysine isopeptide (Lys-Gly) (interchain with G-Cter in SUMO2) cross-links involve residues lysine 5, lysine 10, lysine 14, lysine 33, and lysine 55. The segment covering 57-66 (AISNILNRGH) has biased composition (polar residues). The segment at 57 to 137 (AISNILNRGH…DFTKNSQVGS (81 aa)) is disordered. Lysine 75 is covalently cross-linked (Glycyl lysine isopeptide (Lys-Gly) (interchain with G-Cter in SUMO2)). A Phosphoserine modification is found at serine 80. Polar residues predominate over residues 112 to 123 (SKSSQSSVTVEN). Residues lysine 113, lysine 126, lysine 167, lysine 174, lysine 180, and lysine 187 each participate in a glycyl lysine isopeptide (Lys-Gly) (interchain with G-Cter in SUMO2) cross-link. Residues 176 to 185 (PSTSKVNSVT) are compositionally biased toward polar residues. The tract at residues 176-223 (PSTSKVNSVTPKKPKTSEDVPQINPSTSLPLIGSPPVTSSQVMLSKGT) is disordered. A compositionally biased stretch (polar residues) spans 211 to 223 (PVTSSQVMLSKGT). Residue threonine 223 is modified to Phosphothreonine. Serine 227 bears the Phosphoserine mark. Lysine 273 is covalently cross-linked (Glycyl lysine isopeptide (Lys-Gly) (interchain with G-Cter in SUMO2)). C2H2-type zinc fingers lie at residues 316 to 338 (FKCF…MKHH), 353 to 376 (TTCQ…ESTH), 383 to 406 (TICK…KDTH), 413 to 436 (YVCQ…RAAH), and 470 to 492 (HRCP…KAQH). Residue lysine 522 forms a Glycyl lysine isopeptide (Lys-Gly) (interchain with G-Cter in SUMO2) linkage. A compositionally biased stretch (polar residues) spans 535 to 579 (SFLQVTPPTSQNTTARNPRKSNASRSKTSKLHATTSTASKVNTSK). Positions 535–602 (SFLQVTPPTS…YKQKRQRNRK (68 aa)) are disordered. A Phosphothreonine modification is found at threonine 540. Residues lysine 564 and lysine 574 each participate in a glycyl lysine isopeptide (Lys-Gly) (interchain with G-Cter in SUMO2) cross-link. Over residues 580 to 602 (PRGRIAKSKAKPSYKQKRQRNRK) the composition is skewed to basic residues.

It is found in the nucleus. May function as a transcription factor. The sequence is that of Zinc finger protein 280C (ZNF280C) from Homo sapiens (Human).